The sequence spans 677 residues: MSQSARKILVTNALPYANGPIHIGHMLGYIQADIWVRFQKLRGNECHFVCADDAHGTPIMLKAQQLGITPEQMIGDMQRSHESDFSDFLVGFDHYYSTHSDENRELAETIYTRLDKAGHIKTKVIEQLYDPQKEMFLPDRFVKGECPDCGAEDQYGDNCDVCGATYAPTDLKNPKSVVSGAEPELRESEHYFFDLPAFGDMLKSWTRSGSLQNEMANKLNEWFEQGLQRWDISRDAPYFGFKIPGTENKYFYVWLDAPIGYMSSFKNYCSTTGKADWDTYWQADSEAELYHFIGKDIIYFHSLFWPAMLKGADFRQPTNVWAHGFITVNGTKMSKSKGTFIKARTYLEHLDPEYLRYYFAAKLTSRIDDLDLNLTDFAQRVNSDLVGKVINIASRCAGFIQKKFDGRLSSNVADSALLEDFQLAGDNIAELYEKREFSRAMRDIMALADRANQYIADKEPWQLIKQEGSEQEVHEICSLGINLFRVLMVYLAPVVPKLTEEVQSFLNDNFTWDSHKTALTDHPIDKFKALMQRVEMDDVNAMIDASKEEQASQTPAVEANDELKKEPIADEISFDDFAKVDLRVARIANAEHVEGADKLLKLTLDLGGETRQVFAGIKSAYDPEALKGQLTVMVANLAPRKMRFGLSEGMVLAAGPGKDEIYILNPHDGAKPGMRIM.

The 'HIGH' region signature appears at 15-25 (PYANGPIHIGH). Residues Cys146, Cys149, Cys159, and Cys162 each coordinate Zn(2+). A 'KMSKS' region motif is present at residues 332–336 (KMSKS). Lys335 is a binding site for ATP. The 102-residue stretch at 576-677 (DFAKVDLRVA…DGAKPGMRIM (102 aa)) folds into the tRNA-binding domain.

Belongs to the class-I aminoacyl-tRNA synthetase family. MetG type 1 subfamily. Homodimer. Requires Zn(2+) as cofactor.

The protein resides in the cytoplasm. It catalyses the reaction tRNA(Met) + L-methionine + ATP = L-methionyl-tRNA(Met) + AMP + diphosphate. In terms of biological role, is required not only for elongation of protein synthesis but also for the initiation of all mRNA translation through initiator tRNA(fMet) aminoacylation. The chain is Methionine--tRNA ligase from Idiomarina loihiensis (strain ATCC BAA-735 / DSM 15497 / L2-TR).